A 386-amino-acid chain; its full sequence is Succinate--CoA ligase [ADP-forming] subunit beta (386 aa).

The ATP-grasp domain maps to 9-244 (KDILRQFGVP…LDEEDPAEVE (236 aa)). ATP is bound by residues Lys-46, 53-55 (GRG), Glu-99, Ala-102, and Glu-107. Asn-199 and Asp-213 together coordinate Mg(2+). Substrate contacts are provided by residues Asn-264 and 321–323 (GIM).

The protein belongs to the succinate/malate CoA ligase beta subunit family. In terms of assembly, heterotetramer of two alpha and two beta subunits. Mg(2+) serves as cofactor.

The enzyme catalyses succinate + ATP + CoA = succinyl-CoA + ADP + phosphate. It carries out the reaction GTP + succinate + CoA = succinyl-CoA + GDP + phosphate. The protein operates within carbohydrate metabolism; tricarboxylic acid cycle; succinate from succinyl-CoA (ligase route): step 1/1. Succinyl-CoA synthetase functions in the citric acid cycle (TCA), coupling the hydrolysis of succinyl-CoA to the synthesis of either ATP or GTP and thus represents the only step of substrate-level phosphorylation in the TCA. The beta subunit provides nucleotide specificity of the enzyme and binds the substrate succinate, while the binding sites for coenzyme A and phosphate are found in the alpha subunit. The sequence is that of Succinate--CoA ligase [ADP-forming] subunit beta from Delftia acidovorans (strain DSM 14801 / SPH-1).